A 562-amino-acid polypeptide reads, in one-letter code: MSYANEEFEGSYDPYNYQADYDMHTGDPKQDLAYERQYEQQTYQVIPEVIKNFIQYFHKTVSDLIDQKVYELQASRVSSDVIDQKVYEIQDIYENSWTKLTERFFKNSPWPEAEAIAPQVGNDAVFLILYKELYYRHIYAKVSGGPTLEQRFESYYNYCNLFNYILNADGPAPLELPNQWLWDIIDEFIYQFQSFSQYRCKTAKKSEEEIEFLRSNPKIWNVHSVLNVLHSLVDKSNINRQLEVYTSGGDPESVAGEYGRHSLYKMLGYFSLVGLLRLHSLLGDYYQAIKVLENIELNKKSMYSRVPECQVTTYYYVGFAYLMMRRYQDAIRVFANILLYIQRTKSMFQRTTYKYEMINKQNEQMHGLLAIALTMYPMRIDESIHTQLREKYGDKMLRMQKGDAQIYEELFNYACPKFLSPVVPNYDNVHPNYHKEPYLQQLKVFLDEVQQQAQLSTIRSFLKLYTTMPVAKLAGFLDLPEQEFRIQLLVFKHKMKNLVWTSGISALEGEFQSASEVDFYIDKDMIHIADTKVARRYGDFFIRQIHKFEELNKTLKKMSQKP.

A PCI domain is found at 329–535 (DAIRVFANIL…IHIADTKVAR (207 aa)).

Belongs to the eIF-3 subunit L family. As to quaternary structure, component of the eukaryotic translation initiation factor 3 (eIF-3) complex, which is composed of 13 subunits: eif3a, eif3b, eif3c, eif3d, eif3e, eif3f, eif3g, eif3h, eif3i, eif3j, eif3k, eif3l and eif3m.

The protein localises to the cytoplasm. In terms of biological role, component of the eukaryotic translation initiation factor 3 (eIF-3) complex, which is involved in protein synthesis of a specialized repertoire of mRNAs and, together with other initiation factors, stimulates binding of mRNA and methionyl-tRNAi to the 40S ribosome. The eIF-3 complex specifically targets and initiates translation of a subset of mRNAs involved in cell proliferation. The chain is Eukaryotic translation initiation factor 3 subunit L (eif3l) from Xenopus tropicalis (Western clawed frog).